Consider the following 556-residue polypeptide: 2-succinyl-5-enolpyruvyl-6-hydroxy-3-cyclohexene-1-carboxylate synthase (556 aa).

Belongs to the TPP enzyme family. MenD subfamily. As to quaternary structure, homodimer. Mg(2+) serves as cofactor. Requires Mn(2+) as cofactor. The cofactor is thiamine diphosphate.

It carries out the reaction isochorismate + 2-oxoglutarate + H(+) = 5-enolpyruvoyl-6-hydroxy-2-succinyl-cyclohex-3-ene-1-carboxylate + CO2. It participates in quinol/quinone metabolism; 1,4-dihydroxy-2-naphthoate biosynthesis; 1,4-dihydroxy-2-naphthoate from chorismate: step 2/7. It functions in the pathway quinol/quinone metabolism; menaquinone biosynthesis. In terms of biological role, catalyzes the thiamine diphosphate-dependent decarboxylation of 2-oxoglutarate and the subsequent addition of the resulting succinic semialdehyde-thiamine pyrophosphate anion to isochorismate to yield 2-succinyl-5-enolpyruvyl-6-hydroxy-3-cyclohexene-1-carboxylate (SEPHCHC). The protein is 2-succinyl-5-enolpyruvyl-6-hydroxy-3-cyclohexene-1-carboxylate synthase of Escherichia coli (strain K12 / MC4100 / BW2952).